The following is a 419-amino-acid chain: MDKFRVQGPTTLQGEVTISGAKNAALPILFAALLAEEPVEIQNVPKLKDVDTSMKLLSQLGAKVERNGSVHIDASQVNVFCAPYDLVKTMRASIWALGPLVARFGQGQVSLPGGCTIGARPVDLHITGLEQLGATIKLEEGYVKASVEGRLKGAHIVMDKVSVGATVTIMCAATLAEGTTIIENAAREPEIVDTANFLVTLGAKIAGQGTDRITIEGVERLGSGVYRVLPDRIETGTFLVAAAISRGKILCRNAQPDTLDAVLAKLRDAGADIEVGEDWISLDMHGKRPKAVNVRTAPHPAFPTDMQAQFTLLNLVAEGTGFITETVFENRFMHVPELSRMGARAEIESNTVICHGIETLSGAQVMATDLRASASLVLAGCIAEGTTIVDRIYHIDRGYERIEDKLRALGANIERVKGE.

Position 22–23 (22–23 (KN)) interacts with phosphoenolpyruvate. R91 lines the UDP-N-acetyl-alpha-D-glucosamine pocket. C115 (proton donor) is an active-site residue. C115 bears the 2-(S-cysteinyl)pyruvic acid O-phosphothioketal mark. UDP-N-acetyl-alpha-D-glucosamine contacts are provided by residues 120-124 (RPVDL), 160-163 (KVSV), D305, and V327.

The protein belongs to the EPSP synthase family. MurA subfamily.

The protein localises to the cytoplasm. The enzyme catalyses phosphoenolpyruvate + UDP-N-acetyl-alpha-D-glucosamine = UDP-N-acetyl-3-O-(1-carboxyvinyl)-alpha-D-glucosamine + phosphate. It functions in the pathway cell wall biogenesis; peptidoglycan biosynthesis. Its function is as follows. Cell wall formation. Adds enolpyruvyl to UDP-N-acetylglucosamine. This chain is UDP-N-acetylglucosamine 1-carboxyvinyltransferase, found in Salmonella gallinarum (strain 287/91 / NCTC 13346).